Consider the following 145-residue polypeptide: Large ribosomal subunit protein uL13 (145 aa).

The protein belongs to the universal ribosomal protein uL13 family. As to quaternary structure, part of the 50S ribosomal subunit.

Functionally, this protein is one of the early assembly proteins of the 50S ribosomal subunit, although it is not seen to bind rRNA by itself. It is important during the early stages of 50S assembly. The protein is Large ribosomal subunit protein uL13 of Geobacillus thermodenitrificans (strain NG80-2).